A 498-amino-acid polypeptide reads, in one-letter code: Protein spinster homolog 3 (498 aa).

A run of 12 helical transmembrane segments spans residues 49–71, 87–107, 114–134, 148–168, 175–195, 207–227, 260–280, 309–329, 343–363, 373–393, 407–427, and 451–471; these read IAVA…IAGV, GLLQ…FGYL, KLIM…SSFV, LVGT…GDLF, LMIS…YIIG, WALR…VFLI, FVWS…LAFW, YIFG…GTCI, LICA…IVLA, FIAI…DILL, LQIM…IGAI, and LLCP…SLYI.

Belongs to the major facilitator superfamily. Spinster (TC 2.A.1.49) family.

It localises to the membrane. Sphingolipid transporter. This chain is Protein spinster homolog 3 (spns3), found in Danio rerio (Zebrafish).